The following is a 148-amino-acid chain: Small ribosomal subunit protein uS7c (148 aa).

This sequence belongs to the universal ribosomal protein uS7 family. Part of the 30S ribosomal subunit.

The protein localises to the plastid. It localises to the chloroplast. One of the primary rRNA binding proteins, it binds directly to 16S rRNA where it nucleates assembly of the head domain of the 30S subunit. In Cyanidioschyzon merolae (strain NIES-3377 / 10D) (Unicellular red alga), this protein is Small ribosomal subunit protein uS7c (rps7).